The following is an 805-amino-acid chain: Shutoff protein (805 aa).

Residues 1–88 (MESVEKEDSL…QVGRGDQRHG (88 aa)) are disordered. Over residues 18 to 29 (TTASTDAANAPT) the composition is skewed to polar residues. 2 stretches are compositionally biased toward basic and acidic residues: residues 59-70 (RSVPTEDKKQDQ) and 79-88 (QVGRGDQRHG). The tract at residues 280–345 (VMSELIVRRA…AVLVTVELEC (66 aa)) is binding to host EIF4G. Residues 348–466 (RFFADPEMQR…DLWTAFNERS (119 aa)) enclose the RRM domain. A phosphotyrosine; by host mark is found at Tyr365 and Tyr682. The tract at residues 684-805 (DPQSGEELNP…AGTACSPTQP (122 aa)) is disordered. Gly residues predominate over residues 726 to 742 (GRGGILGQSGRGGFGRG). Residues 754 to 763 (RSFRGRRGVR) are compositionally biased toward basic residues.

The protein belongs to the adenoviridae shutoff protein family. In terms of assembly, monomer. Interacts with hexon protein; this interaction allows chaperoning and trimerization of hexon proteins. Interacts (via N-terminus) with host initiation factor EIF4G (via C-terminus). Interacts (via RRM domain) with viral mRNAs that contain the tripartite leader; this interaction allows ribosome shunting and expression of viral late mRNAs. Post-translationally, might be cleaved by the viral protease. Phosphorylated. Tyrosine phosphorylation enhances preferential binding to tripartite leader mRNAs and allows ribosome shunting. In terms of processing, methylated. Asymmetric dimethylation by host PRMT1 of the Arg/Gly-rich region may regulate shutoff protein binding to hexon and promote the capsid assembly in the nucleus.

It is found in the host cytoplasm. Protein that inhibits host translation while promoting late viral translation by ribosome shunting. Blocks host cap-dependent translation by binding to eIF4G, displacing MKNK1 from cap initiation complexes and preventing EIF4E phosphorylation. Binds to the tripartite leader sequence of viral late mRNAs and recruits host eIF4G, PABPC1/poly-A binding protein and 40S ribosomes subunits on viral mRNAs, allowing ribosome shunting and efficient translation of late viral mRNAs even though conventional translation via ribosome scanning from the cap has been shut off in the host cell. During assembly, acts as a chaperone protein that helps hexon proteins assembly into trimers. This Homo sapiens (Human) protein is Shutoff protein.